A 433-amino-acid chain; its full sequence is Glutamate-1-semialdehyde 2,1-aminomutase (433 aa).

The residue at position 273 (Lys-273) is an N6-(pyridoxal phosphate)lysine.

This sequence belongs to the class-III pyridoxal-phosphate-dependent aminotransferase family. HemL subfamily. Homodimer. It depends on pyridoxal 5'-phosphate as a cofactor.

Its subcellular location is the cytoplasm. It catalyses the reaction (S)-4-amino-5-oxopentanoate = 5-aminolevulinate. It functions in the pathway porphyrin-containing compound metabolism; protoporphyrin-IX biosynthesis; 5-aminolevulinate from L-glutamyl-tRNA(Glu): step 2/2. This is Glutamate-1-semialdehyde 2,1-aminomutase from Ralstonia nicotianae (strain ATCC BAA-1114 / GMI1000) (Ralstonia solanacearum).